A 78-amino-acid polypeptide reads, in one-letter code: Small ribosomal subunit protein bS18 (78 aa).

This sequence belongs to the bacterial ribosomal protein bS18 family. In terms of assembly, part of the 30S ribosomal subunit. Forms a tight heterodimer with protein bS6.

In terms of biological role, binds as a heterodimer with protein bS6 to the central domain of the 16S rRNA, where it helps stabilize the platform of the 30S subunit. The polypeptide is Small ribosomal subunit protein bS18 (Beutenbergia cavernae (strain ATCC BAA-8 / DSM 12333 / CCUG 43141 / JCM 11478 / NBRC 16432 / NCIMB 13614 / HKI 0122)).